The following is a 363-amino-acid chain: Histidinol-phosphate aminotransferase (363 aa).

At Lys-220 the chain carries N6-(pyridoxal phosphate)lysine.

The protein belongs to the class-II pyridoxal-phosphate-dependent aminotransferase family. Histidinol-phosphate aminotransferase subfamily. In terms of assembly, homodimer. The cofactor is pyridoxal 5'-phosphate.

It catalyses the reaction L-histidinol phosphate + 2-oxoglutarate = 3-(imidazol-4-yl)-2-oxopropyl phosphate + L-glutamate. Its pathway is amino-acid biosynthesis; L-histidine biosynthesis; L-histidine from 5-phospho-alpha-D-ribose 1-diphosphate: step 7/9. This is Histidinol-phosphate aminotransferase from Paramagnetospirillum magneticum (strain ATCC 700264 / AMB-1) (Magnetospirillum magneticum).